A 694-amino-acid chain; its full sequence is Polyribonucleotide nucleotidyltransferase (694 aa).

Residues Asp-485 and Asp-491 each contribute to the Mg(2+) site. Residues 552-611 (PRIETMQIKPNKIATVIGPGGKQIRQIIEEAGVQIDINDSGLVSISASSPQAIEKAKSII) enclose the KH domain. The region spanning 621-689 (GKIYEGRVTS…EKGQYKLSHK (69 aa)) is the S1 motif domain.

Belongs to the polyribonucleotide nucleotidyltransferase family. Requires Mg(2+) as cofactor.

It is found in the cytoplasm. The catalysed reaction is RNA(n+1) + phosphate = RNA(n) + a ribonucleoside 5'-diphosphate. Its function is as follows. Involved in mRNA degradation. Catalyzes the phosphorolysis of single-stranded polyribonucleotides processively in the 3'- to 5'-direction. The polypeptide is Polyribonucleotide nucleotidyltransferase (Chlamydia felis (strain Fe/C-56) (Chlamydophila felis)).